Reading from the N-terminus, the 47-residue chain is uncharacterized protein (47 aa).

Positions 1–18 (MKKWLLIIAGALIISACA) are cleaved as a signal peptide. The disordered stretch occupies residues 28–47 (EGSHSGVKFDKDSRQWGLNQ).

This is an uncharacterized protein from Haemophilus influenzae (strain ATCC 51907 / DSM 11121 / KW20 / Rd).